The primary structure comprises 873 residues: Valine--tRNA ligase (873 aa).

The 'HIGH' region signature appears at 46–56 (PNVTGKLHIGH). The 'KMSKS' region motif lies at 525 to 529 (KMSKS). Lys-528 serves as a coordination point for ATP. Residues 804-873 (NDDFIDKEKM…ELIQDKLNKM (70 aa)) are a coiled coil.

Belongs to the class-I aminoacyl-tRNA synthetase family. ValS type 1 subfamily. Monomer.

It is found in the cytoplasm. The enzyme catalyses tRNA(Val) + L-valine + ATP = L-valyl-tRNA(Val) + AMP + diphosphate. Its function is as follows. Catalyzes the attachment of valine to tRNA(Val). As ValRS can inadvertently accommodate and process structurally similar amino acids such as threonine, to avoid such errors, it has a 'posttransfer' editing activity that hydrolyzes mischarged Thr-tRNA(Val) in a tRNA-dependent manner. The polypeptide is Valine--tRNA ligase (Mesoplasma florum (strain ATCC 33453 / NBRC 100688 / NCTC 11704 / L1) (Acholeplasma florum)).